Consider the following 493-residue polypeptide: Phospholipid transfer protein (493 aa).

Residues 1–17 form the signal peptide; it reads MALFGALFLALLAGAHA. An N-linked (GlcNAc...) (complex) asparagine glycan is attached at Asn64. N-linked (GlcNAc...) asparagine glycosylation is present at Asn94. Asn117 carries N-linked (GlcNAc...) (complex) asparagine glycosylation. An N-linked (GlcNAc...) asparagine glycan is attached at Asn143. Cys146 and Cys185 are joined by a disulfide. Residue Asn245 is glycosylated (N-linked (GlcNAc...) (complex) asparagine). The N-linked (GlcNAc...) asparagine glycan is linked to Asn398.

The protein belongs to the BPI/LBP/Plunc superfamily. BPI/LBP family. Post-translationally, glycosylation is necessary for secretion and its phospholipid transfer activity. As to expression, widely expressed. Highest level of expression in the ovary, thymus and placenta, with moderate levels found in the pancreas, small intestine, testis, lung and prostrate. Low level expression in the kidney, liver and spleen, with very low levels found in the heart, colon, skeletal muscle, leukocytes and brain. Expressed in the cortical neurons.

The protein resides in the secreted. The protein localises to the nucleus. The enzyme catalyses a 1,2-diacyl-sn-glycero-3-phosphocholine(in) = a 1,2-diacyl-sn-glycero-3-phosphocholine(out). It catalyses the reaction a 1,2-diacyl-sn-glycero-3-phosphoethanolamine(in) = a 1,2-diacyl-sn-glycero-3-phosphoethanolamine(out). The catalysed reaction is a 1,2-diacyl-sn-glycerol(in) = a 1,2-diacyl-sn-glycerol(out). It carries out the reaction a 1,2-diacyl-sn-glycero-3-phosphate(in) = a 1,2-diacyl-sn-glycero-3-phosphate(out). The enzyme catalyses a sphingomyelin(in) = a sphingomyelin(out). It catalyses the reaction a 1,2-diacyl-sn-glycero-3-phospho-(1'-sn-glycerol)(in) = a 1,2-diacyl-sn-glycero-3-phospho-(1'-sn-glycerol)(out). The catalysed reaction is a 1,2-diacyl-sn-glycero-3-phospho-(1D-myo-inositol)(in) = a 1,2-diacyl-sn-glycero-3-phospho-(1D-myo-inositol)(out). It carries out the reaction 1-hexadecanoyl-2-(5Z,8Z,11Z,14Z-eicosatetraenoyl)-sn-glycero-3-phosphoethanolamine(in) = 1-hexadecanoyl-2-(5Z,8Z,11Z,14Z-eicosatetraenoyl)-sn-glycero-3-phosphoethanolamine(out). The enzyme catalyses N-(hexadecanoyl)-sphing-4-enine-1-phosphocholine(in) = N-(hexadecanoyl)-sphing-4-enine-1-phosphocholine(out). It catalyses the reaction 1,2-dihexadecanoyl-sn-glycero-3-phosphocholine(in) = 1,2-dihexadecanoyl-sn-glycero-3-phosphocholine(out). Mediates the transfer of phospholipids and free cholesterol from triglyceride-rich lipoproteins (low density lipoproteins or LDL and very low density lipoproteins or VLDL) into high-density lipoproteins (HDL) as well as the exchange of phospholipids between triglyceride-rich lipoproteins themselves. Facilitates the transfer of a spectrum of different lipid molecules, including diacylglycerol, phosphatidic acid, sphingomyelin, phosphatidylcholine, phosphatidylinositol, phosphatidylglycerol, cerebroside and phosphatidyl ethanolamine. Plays an important role in HDL remodeling which involves modulating the size and composition of HDL. Also plays a key role in the uptake of cholesterol from peripheral cells and tissues that is subsequently transported to the liver for degradation and excretion. Two distinct forms of PLTP exist in plasma: an active form that can transfer phosphatidylcholine from phospholipid vesicles to HDL, and an inactive form that lacks this capability. The protein is Phospholipid transfer protein (PLTP) of Homo sapiens (Human).